Consider the following 64-residue polypeptide: Large ribosomal subunit protein uL30 (64 aa).

As to quaternary structure, part of the 50S ribosomal subunit. The protein is methylated on either Ala-2 or Lys-3.

This Rhodopseudomonas palustris (strain ATCC BAA-98 / CGA009) protein is Large ribosomal subunit protein uL30.